The sequence spans 887 residues: Alanine--tRNA ligase (887 aa).

Residues histidine 581, histidine 585, cysteine 683, and histidine 687 each coordinate Zn(2+).

This sequence belongs to the class-II aminoacyl-tRNA synthetase family. It depends on Zn(2+) as a cofactor.

Its subcellular location is the cytoplasm. The enzyme catalyses tRNA(Ala) + L-alanine + ATP = L-alanyl-tRNA(Ala) + AMP + diphosphate. Its function is as follows. Catalyzes the attachment of alanine to tRNA(Ala) in a two-step reaction: alanine is first activated by ATP to form Ala-AMP and then transferred to the acceptor end of tRNA(Ala). Also edits incorrectly charged Ser-tRNA(Ala) and Gly-tRNA(Ala) via its editing domain. The chain is Alanine--tRNA ligase from Ehrlichia ruminantium (strain Welgevonden).